We begin with the raw amino-acid sequence, 595 residues long: Proline--tRNA ligase (595 aa).

The interval 1–22 (MKMSTMFGATLHTAPGRSESEG) is disordered.

The protein belongs to the class-II aminoacyl-tRNA synthetase family. ProS type 1 subfamily. As to quaternary structure, homodimer.

It is found in the cytoplasm. It catalyses the reaction tRNA(Pro) + L-proline + ATP = L-prolyl-tRNA(Pro) + AMP + diphosphate. Its function is as follows. Catalyzes the attachment of proline to tRNA(Pro) in a two-step reaction: proline is first activated by ATP to form Pro-AMP and then transferred to the acceptor end of tRNA(Pro). As ProRS can inadvertently accommodate and process non-cognate amino acids such as alanine and cysteine, to avoid such errors it has two additional distinct editing activities against alanine. One activity is designated as 'pretransfer' editing and involves the tRNA(Pro)-independent hydrolysis of activated Ala-AMP. The other activity is designated 'posttransfer' editing and involves deacylation of mischarged Ala-tRNA(Pro). The misacylated Cys-tRNA(Pro) is not edited by ProRS. This chain is Proline--tRNA ligase, found in Salinispora tropica (strain ATCC BAA-916 / DSM 44818 / JCM 13857 / NBRC 105044 / CNB-440).